The sequence spans 274 residues: Diaminopimelate epimerase (274 aa).

Substrate-binding residues include N11, Q44, and N64. Catalysis depends on C73, which acts as the Proton donor. Substrate contacts are provided by residues 74–75 (GN), N157, N190, and 208–209 (ER). The active-site Proton acceptor is C217. Residue 218-219 (GS) participates in substrate binding.

The protein belongs to the diaminopimelate epimerase family. As to quaternary structure, homodimer.

It localises to the cytoplasm. It catalyses the reaction (2S,6S)-2,6-diaminopimelate = meso-2,6-diaminopimelate. Its pathway is amino-acid biosynthesis; L-lysine biosynthesis via DAP pathway; DL-2,6-diaminopimelate from LL-2,6-diaminopimelate: step 1/1. In terms of biological role, catalyzes the stereoinversion of LL-2,6-diaminopimelate (L,L-DAP) to meso-diaminopimelate (meso-DAP), a precursor of L-lysine and an essential component of the bacterial peptidoglycan. This chain is Diaminopimelate epimerase, found in Histophilus somni (strain 2336) (Haemophilus somnus).